The chain runs to 346 residues: Anthranilate phosphoribosyltransferase (346 aa).

5-phospho-alpha-D-ribose 1-diphosphate contacts are provided by residues glycine 81, 84-85 (GD), 91-94 (NVST), 109-117 (KHGGRSVSS), and serine 121. An anthranilate-binding site is contributed by glycine 81. Serine 93 is a Mg(2+) binding site. Arginine 167 is a binding site for anthranilate. 2 residues coordinate Mg(2+): aspartate 226 and glutamate 227.

This sequence belongs to the anthranilate phosphoribosyltransferase family. As to quaternary structure, homodimer. Mg(2+) is required as a cofactor.

The enzyme catalyses N-(5-phospho-beta-D-ribosyl)anthranilate + diphosphate = 5-phospho-alpha-D-ribose 1-diphosphate + anthranilate. The protein operates within amino-acid biosynthesis; L-tryptophan biosynthesis; L-tryptophan from chorismate: step 2/5. Functionally, catalyzes the transfer of the phosphoribosyl group of 5-phosphorylribose-1-pyrophosphate (PRPP) to anthranilate to yield N-(5'-phosphoribosyl)-anthranilate (PRA). The chain is Anthranilate phosphoribosyltransferase from Marinomonas sp. (strain MWYL1).